The following is a 164-amino-acid chain: Crossover junction endodeoxyribonuclease RuvC (164 aa).

Active-site residues include Asp-7, Glu-66, and Asp-138. Mg(2+)-binding residues include Asp-7, Glu-66, and Asp-138.

It belongs to the RuvC family. Homodimer which binds Holliday junction (HJ) DNA. The HJ becomes 2-fold symmetrical on binding to RuvC with unstacked arms; it has a different conformation from HJ DNA in complex with RuvA. In the full resolvosome a probable DNA-RuvA(4)-RuvB(12)-RuvC(2) complex forms which resolves the HJ. Mg(2+) serves as cofactor.

The protein resides in the cytoplasm. It carries out the reaction Endonucleolytic cleavage at a junction such as a reciprocal single-stranded crossover between two homologous DNA duplexes (Holliday junction).. Functionally, the RuvA-RuvB-RuvC complex processes Holliday junction (HJ) DNA during genetic recombination and DNA repair. Endonuclease that resolves HJ intermediates. Cleaves cruciform DNA by making single-stranded nicks across the HJ at symmetrical positions within the homologous arms, yielding a 5'-phosphate and a 3'-hydroxyl group; requires a central core of homology in the junction. The consensus cleavage sequence is 5'-(A/T)TT(C/G)-3'. Cleavage occurs on the 3'-side of the TT dinucleotide at the point of strand exchange. HJ branch migration catalyzed by RuvA-RuvB allows RuvC to scan DNA until it finds its consensus sequence, where it cleaves and resolves the cruciform DNA. This is Crossover junction endodeoxyribonuclease RuvC from Paracoccus denitrificans (strain Pd 1222).